The following is a 505-amino-acid chain: DEAD-box ATP-dependent RNA helicase 41 (505 aa).

Residues 27-56 form an HIT-type zinc finger; that stretch reads GEPKCVICSRYGEYICDETNDDVCSLECKQ. The Q motif signature appears at 110–138; the sequence is LTFTSCGLPPKLLLNLETAGYDFPTPIQM. In terms of domain architecture, Helicase ATP-binding spans 141-318; that stretch reads IPAALTGKSL…GSLAKEIILV (178 aa). 154-161 lines the ATP pocket; that stretch reads ADTGSGKT. Positions 267–270 match the DEAD box motif; it reads DEVD. The Helicase C-terminal domain occupies 342–492; sequence KKQKLFDILR…AIPKELINLT (151 aa).

This sequence belongs to the DEAD box helicase family. DDX59 subfamily.

It carries out the reaction ATP + H2O = ADP + phosphate + H(+). This Arabidopsis thaliana (Mouse-ear cress) protein is DEAD-box ATP-dependent RNA helicase 41 (RH41).